Reading from the N-terminus, the 249-residue chain is Isoprenyl transferase (249 aa).

Residue Asp-25 is part of the active site. Asp-25 contributes to the Mg(2+) binding site. Residues 26–29, Trp-30, Arg-38, His-42, and 70–72 contribute to the substrate site; these read GNGR and STE. Residue Asn-73 is the Proton acceptor of the active site. Substrate-binding positions include Trp-74, Arg-76, Arg-197, and 203-205; that span reads RLS. Mg(2+) is bound at residue Glu-216.

This sequence belongs to the UPP synthase family. Homodimer. The cofactor is Mg(2+).

Its function is as follows. Catalyzes the condensation of isopentenyl diphosphate (IPP) with allylic pyrophosphates generating different type of terpenoids. The chain is Isoprenyl transferase from Streptococcus pyogenes serotype M1.